A 411-amino-acid polypeptide reads, in one-letter code: Phosphopentomutase (411 aa).

Mn(2+) is bound by residues aspartate 14, aspartate 306, histidine 311, aspartate 347, histidine 348, and histidine 359.

It belongs to the phosphopentomutase family. Mn(2+) is required as a cofactor.

The protein localises to the cytoplasm. The enzyme catalyses 2-deoxy-alpha-D-ribose 1-phosphate = 2-deoxy-D-ribose 5-phosphate. It carries out the reaction alpha-D-ribose 1-phosphate = D-ribose 5-phosphate. It functions in the pathway carbohydrate degradation; 2-deoxy-D-ribose 1-phosphate degradation; D-glyceraldehyde 3-phosphate and acetaldehyde from 2-deoxy-alpha-D-ribose 1-phosphate: step 1/2. Isomerase that catalyzes the conversion of deoxy-ribose 1-phosphate (dRib-1-P) and ribose 1-phosphate (Rib-1-P) to deoxy-ribose 5-phosphate (dRib-5-P) and ribose 5-phosphate (Rib-5-P), respectively. The chain is Phosphopentomutase from Lactococcus lactis subsp. cremoris (strain MG1363).